The following is a 353-amino-acid chain: UDP-xylose transporter 2 (353 aa).

10 helical membrane-spanning segments follow: residues 7–27 (FQLG…SIVI), 31–51 (ALIS…HLLV), 75–95 (VLGF…SLGF), 100–120 (FYQM…TIFF), 132–152 (LVIL…LNML), 154–174 (SVLS…TNTI), 194–214 (AITL…QNVF), 224–244 (FFIV…FLVI), 250–270 (VTYQ…GYLL), and 280–300 (ILGI…CTLE). The disordered stretch occupies residues 308–353 (TSTQLPQMDENEKDPLVSAENGSGLISDNGVQKQDPVWNSNKDFQA). The segment covering 327-353 (ENGSGLISDNGVQKQDPVWNSNKDFQA) has biased composition (polar residues). S334 is subject to Phosphoserine.

Belongs to the TPT transporter family. TPT (TC 2.A.7.9) subfamily. Ubiquitous.

It is found in the golgi apparatus membrane. Its function is as follows. Nucleotide-sugar transporter that transports UDP-xylose and UMP in a strict counter-exchange mode. The sequence is that of UDP-xylose transporter 2 from Arabidopsis thaliana (Mouse-ear cress).